The primary structure comprises 295 residues: Lectin 11 (295 aa).

Residues 1 to 22 (MHYSHFYFIINNTNMTINAIPK) are Cytoplasmic-facing. The helical transmembrane segment at 23-45 (LFATKNSISLSIVIFMYLLILVA) threads the bilayer. The Extracellular segment spans residues 46 to 295 (NVKSDSSFNF…ILSWSFTSNM (250 aa)). An N-linked (GlcNAc...) asparagine glycan is attached at asparagine 152.

This sequence belongs to the leguminous lectin family.

It is found in the membrane. Functionally, may be involved in arbuscular mycorrhizal (AM) symbiosis with AM fungi. This is Lectin 11 from Medicago truncatula (Barrel medic).